The sequence spans 105 residues: Integration host factor subunit beta (105 aa).

It belongs to the bacterial histone-like protein family. In terms of assembly, heterodimer of an alpha and a beta chain.

Functionally, this protein is one of the two subunits of integration host factor, a specific DNA-binding protein that functions in genetic recombination as well as in transcriptional and translational control. The polypeptide is Integration host factor subunit beta (Nitrosomonas eutropha (strain DSM 101675 / C91 / Nm57)).